Consider the following 301-residue polypeptide: Vomeronasal type-1 receptor 4 (301 aa).

The Extracellular segment spans residues 1-5 (MASRY). A helical transmembrane segment spans residues 6 to 26 (VAVGMILSQTVVGVLGSFSVL). The Cytoplasmic portion of the chain corresponds to 27–48 (LHYLSFYCTGCRLRSTDLIVKH). The helical transmembrane segment at 49–69 (LIVANFLALRCKGVPQTMAAF) threads the bilayer. The Extracellular segment spans residues 70–88 (GVRYFLNALGCKLVFYLHR). The helical transmembrane segment at 89-109 (VGRGVSIGTTCLLSVFQVITV) threads the bilayer. The Cytoplasmic segment spans residues 110–126 (SSRKSRWAKLKEKAPKH). The helical transmembrane segment at 127 to 147 (VGFSVLLCWIVCMLVNIIFPM) threads the bilayer. Topologically, residues 148 to 185 (YVTGKWNYTNITVNEDLGYCSGGGNNKIAQTLRAMLLS) are extracellular. N-linked (GlcNAc...) asparagine glycosylation is found at asparagine 154 and asparagine 157. Residues 186–206 (FPDVLCLGLMLWVSSSMVCIL) form a helical membrane-spanning segment. The Cytoplasmic segment spans residues 207–234 (HRHKQRVQHIDRSNLSPRASPENRATQS). Residues 235–255 (ILILVSTFVSSYTLSCLFQVC) form a helical membrane-spanning segment. Topologically, residues 256 to 264 (MALLDNPNS) are extracellular. Residues 265 to 285 (LLVNTSALMSVCFPTLSPFVL) traverse the membrane as a helical segment. The Cytoplasmic portion of the chain corresponds to 286–301 (MSCDPSVYRFCFAWKR).

Belongs to the G-protein coupled receptor 1 family.

The protein localises to the cell membrane. Its function is as follows. Putative pheromone receptor. In Homo sapiens (Human), this protein is Vomeronasal type-1 receptor 4 (VN1R4).